The chain runs to 227 residues: Ornithine decarboxylase antizyme 1 (227 aa).

Residues 20–50 (EGDKPSATVHATRTMPLLSLHSRGGRSSESS) form a disordered region. Residues 36-50 (LLSLHSRGGRSSESS) show a composition bias toward low complexity.

Belongs to the ODC antizyme family. Interacts with ODC1 and thereby sterically blocks ODC homodimerization. Forms a ternary complex with PSMB4 and OAZ1 before PSMB4 is incorporated into the 20S proteasome. Interacts with AZIN2; this interaction disrupts the interaction between the antizyme and ODC1. Interacts with FAM171A1.

Ornithine decarboxylase (ODC) antizyme protein that negatively regulates ODC activity and intracellular polyamine biosynthesis and uptake in response to increased intracellular polyamine levels. Binds to ODC monomers, inhibiting the assembly of the functional ODC homodimer, and targets the monomers for ubiquitin-independent proteolytic destruction by the 26S proteasome. Triggers ODC degradation by inducing the exposure of a cryptic proteasome-interacting surface of ODC. Stabilizes AZIN2 by interfering with its ubiquitination. Also inhibits cellular uptake of polyamines by inactivating the polyamine uptake transporter. SMAD1/OAZ1/PSMB4 complex mediates the degradation of the CREBBP/EP300 repressor SNIP1. Involved in the translocation of AZIN2 from ER-Golgi intermediate compartment (ERGIC) to the cytosol. This is Ornithine decarboxylase antizyme 1 (OAZ1) from Bos taurus (Bovine).